Here is a 177-residue protein sequence, read N- to C-terminus: Dual-action ribosomal maturation protein DarP (177 aa).

Belongs to the DarP family.

The protein resides in the cytoplasm. In terms of biological role, member of a network of 50S ribosomal subunit biogenesis factors which assembles along the 30S-50S interface, preventing incorrect 23S rRNA structures from forming. Promotes peptidyl transferase center (PTC) maturation. This chain is Dual-action ribosomal maturation protein DarP, found in Glaesserella parasuis serovar 5 (strain SH0165) (Haemophilus parasuis).